We begin with the raw amino-acid sequence, 259 residues long: 3-dehydroquinate dehydratase (259 aa).

3-dehydroquinate-binding positions include 50–52 (EWR) and Arg-86. His-147 serves as the catalytic Proton donor/acceptor. Residue Lys-174 is the Schiff-base intermediate with substrate of the active site. 3-dehydroquinate contacts are provided by Arg-216, Ser-235, and Gln-239.

It belongs to the type-I 3-dehydroquinase family. In terms of assembly, homodimer.

The catalysed reaction is 3-dehydroquinate = 3-dehydroshikimate + H2O. It functions in the pathway metabolic intermediate biosynthesis; chorismate biosynthesis; chorismate from D-erythrose 4-phosphate and phosphoenolpyruvate: step 3/7. In terms of biological role, involved in the third step of the chorismate pathway, which leads to the biosynthesis of aromatic amino acids. Catalyzes the cis-dehydration of 3-dehydroquinate (DHQ) and introduces the first double bond of the aromatic ring to yield 3-dehydroshikimate. This chain is 3-dehydroquinate dehydratase, found in Geobacillus sp. (strain WCH70).